Consider the following 319-residue polypeptide: Mitochondrial fission regulator 1-like (319 aa).

The disordered stretch occupies residues 1–35 (MASLGAGAEPESVLFGKDGTEACESPEGRRSGRRK).

The protein belongs to the MTFR1 family.

It localises to the mitochondrion outer membrane. Functionally, mitochondrial protein required for adaptation of miochondrial dynamics to metabolic changes. Regulates mitochondrial morphology at steady state and mediates AMPK-dependent stress-induced mitochondrial fragmentation via the control of OPA1 levels. This is Mitochondrial fission regulator 1-like (mtfr1l) from Xenopus tropicalis (Western clawed frog).